A 538-amino-acid chain; its full sequence is Chaperonin GroEL (538 aa).

ATP contacts are provided by residues 29–32, 86–90, G413, 476–478, and D492; these read TIGP, DGTTT, and NAA.

Belongs to the chaperonin (HSP60) family. As to quaternary structure, forms a cylinder of 14 subunits composed of two heptameric rings stacked back-to-back. Interacts with the co-chaperonin GroES.

It localises to the cytoplasm. The catalysed reaction is ATP + H2O + a folded polypeptide = ADP + phosphate + an unfolded polypeptide.. In terms of biological role, together with its co-chaperonin GroES, plays an essential role in assisting protein folding. The GroEL-GroES system forms a nano-cage that allows encapsulation of the non-native substrate proteins and provides a physical environment optimized to promote and accelerate protein folding. This is Chaperonin GroEL from Staphylococcus aureus (strain bovine RF122 / ET3-1).